Consider the following 492-residue polypeptide: Proline--tRNA ligase (492 aa).

This sequence belongs to the class-II aminoacyl-tRNA synthetase family. ProS type 3 subfamily. As to quaternary structure, homodimer.

The protein resides in the cytoplasm. It catalyses the reaction tRNA(Pro) + L-proline + ATP = L-prolyl-tRNA(Pro) + AMP + diphosphate. Functionally, catalyzes the attachment of proline to tRNA(Pro) in a two-step reaction: proline is first activated by ATP to form Pro-AMP and then transferred to the acceptor end of tRNA(Pro). The chain is Proline--tRNA ligase from Flavobacterium psychrophilum (strain ATCC 49511 / DSM 21280 / CIP 103535 / JIP02/86).